The primary structure comprises 347 residues: Cell shape-determining protein MreB (347 aa).

ATP contacts are provided by residues 19-21 (TAN), 165-167 (GGT), 213-216 (ERIK), and 295-298 (GGAL).

The protein belongs to the FtsA/MreB family. As to quaternary structure, forms polymers in the presence of ATP. Forms pairs of protofilaments that adopt an antiparallel arrangement and bind to lipids.

It localises to the cytoplasm. Its function is as follows. Forms membrane-associated dynamic filaments that are essential for cell shape determination. Acts by regulating cell wall synthesis and cell elongation, and thus cell shape. A feedback loop between cell geometry and MreB localization may maintain elongated cell shape by targeting cell wall growth to regions of negative cell wall curvature. Required for mid-cell peptidoglycan synthesis and cell division. Directs the localization of the cytosolic peptidoglycan precursor-synthesizing enzyme MurG. Also required for proper chromosome segregation. Directs the segregation of origin-proximal but not origin-distal loci. This chain is Cell shape-determining protein MreB, found in Caulobacter vibrioides (strain NA1000 / CB15N) (Caulobacter crescentus).